Here is a 454-residue protein sequence, read N- to C-terminus: UPF0210 protein BL1209 (454 aa).

It belongs to the UPF0210 family. Homodimer.

The sequence is that of UPF0210 protein BL1209 from Bifidobacterium longum (strain NCC 2705).